Reading from the N-terminus, the 253-residue chain is Probable transcriptional regulatory protein A1G_04400 (253 aa).

The interval 1 to 21 (MAGHSKFKNIQHRKGAQDKKR) is disordered.

Belongs to the TACO1 family.

The protein resides in the cytoplasm. This Rickettsia rickettsii (strain Sheila Smith) protein is Probable transcriptional regulatory protein A1G_04400.